Here is a 173-residue protein sequence, read N- to C-terminus: Protein C2 (173 aa).

The segment at 69–85 (CNCHFTIHHECNRGFSH) is a zinc-finger region.

Belongs to the geminiviridae transcriptional activator protein family. In terms of assembly, monomer. Interacting with and inactivating host adenosine kinase 2 (ADK2) in the cytoplasm. Interacts with and inhibits host SNF1 kinase.

The protein localises to the host cytoplasm. Functionally, acts as a suppressor of RNA-mediated gene silencing, also known as post-transcriptional gene silencing (PTGS), a mechanism of plant viral defense that limits the accumulation of viral RNAs. Suppresses the host RNA silencing by inhibiting adenosine kinase 2 (ADK2), a kinase involved in a general methylation pathway. Also suppresses the host basal defense by interacting with and inhibiting SNF1 kinase, a key regulator of cell metabolism implicated in innate antiviral defense. Determines pathogenicity. This Beet curly top virus (strain California/Logan) (BCTV) protein is Protein C2.